Here is a 216-residue protein sequence, read N- to C-terminus: Octanoyltransferase (216 aa).

The 184-residue stretch at 33–216 (AATADELWIV…ANRLSTSLSR (184 aa)) folds into the BPL/LPL catalytic domain. Residues 72-79 (RGGEVTYH), 148-150 (ALG), and 162-164 (GVS) each bind substrate. The Acyl-thioester intermediate role is filled by Cys180.

The protein belongs to the LipB family.

The protein resides in the cytoplasm. The catalysed reaction is octanoyl-[ACP] + L-lysyl-[protein] = N(6)-octanoyl-L-lysyl-[protein] + holo-[ACP] + H(+). It participates in protein modification; protein lipoylation via endogenous pathway; protein N(6)-(lipoyl)lysine from octanoyl-[acyl-carrier-protein]: step 1/2. Its function is as follows. Catalyzes the transfer of endogenously produced octanoic acid from octanoyl-acyl-carrier-protein onto the lipoyl domains of lipoate-dependent enzymes. Lipoyl-ACP can also act as a substrate although octanoyl-ACP is likely to be the physiological substrate. In Janthinobacterium sp. (strain Marseille) (Minibacterium massiliensis), this protein is Octanoyltransferase.